A 534-amino-acid polypeptide reads, in one-letter code: Nitrate/nitrite transporter NrtP (534 aa).

A run of 12 helical transmembrane segments spans residues 19 to 39 (WFAF…ATTI), 52 to 72 (TIGL…GMLL), 79 to 99 (LTYS…ATAQ), 109 to 129 (LLMG…AEWF), 150 to 170 (AFSA…PGAF), 195 to 215 (AAIA…YFSV), 240 to 260 (DFWF…VLAW), 266 to 286 (NFLN…LYLF), 382 to 404 (WTMV…VAGT), 409 to 431 (IAVL…TFAI), 445 to 465 (GNVG…LLLL), and 485 to 505 (GFFQ…AFFL).

The protein belongs to the major facilitator superfamily. Nitrate/nitrite porter (TC 2.A.1.8) family.

It is found in the cell inner membrane. In terms of biological role, high-efficiency transport system for both nitrate and nitrite. The protein is Nitrate/nitrite transporter NrtP of Picosynechococcus sp. (strain ATCC 27264 / PCC 7002 / PR-6) (Agmenellum quadruplicatum).